The primary structure comprises 83 residues: uncharacterized protein (83 aa).

The protein belongs to the chlamydial CPn_0711/CT_665/TC_0036 family.

This is an uncharacterized protein from Chlamydia trachomatis serovar D (strain ATCC VR-885 / DSM 19411 / UW-3/Cx).